Here is a 424-residue protein sequence, read N- to C-terminus: Kynureninase (424 aa).

Residues L105, S106, 133-136 (FPTD), D218, H221, and Y243 contribute to the pyridoxal 5'-phosphate site. K244 bears the N6-(pyridoxal phosphate)lysine mark. Pyridoxal 5'-phosphate contacts are provided by W274 and N302.

Belongs to the kynureninase family. Homodimer. It depends on pyridoxal 5'-phosphate as a cofactor.

It catalyses the reaction L-kynurenine + H2O = anthranilate + L-alanine + H(+). The catalysed reaction is 3-hydroxy-L-kynurenine + H2O = 3-hydroxyanthranilate + L-alanine + H(+). Its pathway is amino-acid degradation; L-kynurenine degradation; L-alanine and anthranilate from L-kynurenine: step 1/1. It functions in the pathway cofactor biosynthesis; NAD(+) biosynthesis; quinolinate from L-kynurenine: step 2/3. Functionally, catalyzes the cleavage of L-kynurenine (L-Kyn) and L-3-hydroxykynurenine (L-3OHKyn) into anthranilic acid (AA) and 3-hydroxyanthranilic acid (3-OHAA), respectively. The chain is Kynureninase from Stenotrophomonas maltophilia (strain K279a).